The following is a 577-amino-acid chain: Steryl-sulfatase (577 aa).

The signal sequence occupies residues 1–19 (MLWPCLLALLLSQLNFLCA). The Lumenal portion of the chain corresponds to 21-183 (RPGPGPNFLL…GTVFGSAQQV (163 aa)). 2 residues coordinate Ca(2+): Asp-34 and Asp-35. A glycan (N-linked (GlcNAc...) asparagine) is linked at Asn-46. Cys-74 serves as a coordination point for Ca(2+). Cys-74 serves as the catalytic Nucleophile. 3-oxoalanine (Cys) is present on Cys-74. Residue His-135 is part of the active site. Disulfide bonds link Cys-140–Cys-147 and Cys-169–Cys-241. The helical transmembrane segment at 184-207 (FVVLPMNILGAVLLAMALARWAGL) threads the bilayer. At 208 to 211 (ARPP) the chain is on the cytoplasmic side. A helical membrane pass occupies residues 212–233 (GWVFGVTVAAMAAVGGAYVAFL). The Lumenal portion of the chain corresponds to 234 to 577 (YHFRPANCFL…PLACRCAGDG (344 aa)). Asn-332 carries N-linked (GlcNAc...) asparagine glycosylation. Positions 341 and 342 each coordinate Ca(2+). 3 disulfides stabilise this stretch: Cys-445–Cys-488, Cys-480–Cys-486, and Cys-561–Cys-571. A glycan (N-linked (GlcNAc...) asparagine) is linked at Asn-458.

The protein belongs to the sulfatase family. As to quaternary structure, homodimer. It depends on Ca(2+) as a cofactor. In terms of processing, the conversion to 3-oxoalanine (also known as C-formylglycine, FGly), of a serine or cysteine residue in prokaryotes and of a cysteine residue in eukaryotes, is critical for catalytic activity.

It localises to the microsome membrane. The protein localises to the endoplasmic reticulum membrane. It catalyses the reaction dehydroepiandrosterone 3-sulfate + H2O = 3beta-hydroxyandrost-5-en-17-one + sulfate + H(+). The catalysed reaction is estrone 3-sulfate + H2O = estrone + sulfate + H(+). Its function is as follows. Catalyzes the conversion of sulfated steroid precursors, such as dehydroepiandrosterone sulfate (DHEA-S) and estrone sulfate to the free steroid. The polypeptide is Steryl-sulfatase (Sts) (Rattus norvegicus (Rat)).